A 490-amino-acid chain; its full sequence is Homoserine O-acetyltransferase (490 aa).

In terms of domain architecture, AB hydrolase-1 spans 47–355 (NAILVCHALT…DYGHDAFLLE (309 aa)). Serine 152 serves as the catalytic Nucleophile. Arginine 222 serves as a coordination point for substrate. Residues aspartate 316 and histidine 349 contribute to the active site. A substrate-binding site is contributed by aspartate 350. CBS domains follow at residues 376–436 (MKTD…LEDV) and 437–490 (MTKD…ISSY).

The protein belongs to the AB hydrolase superfamily. MetX family. As to quaternary structure, homodimer.

It is found in the cytoplasm. It carries out the reaction L-homoserine + acetyl-CoA = O-acetyl-L-homoserine + CoA. Its pathway is amino-acid biosynthesis; L-methionine biosynthesis via de novo pathway; O-acetyl-L-homoserine from L-homoserine: step 1/1. In terms of biological role, transfers an acetyl group from acetyl-CoA to L-homoserine, forming acetyl-L-homoserine. The protein is Homoserine O-acetyltransferase of Methanobrevibacter ruminantium (strain ATCC 35063 / DSM 1093 / JCM 13430 / OCM 146 / M1) (Methanobacterium ruminantium).